The primary structure comprises 83 residues: Arminin 3b (83 aa).

The N-terminal stretch at 1–18 (MKIVFAILFLTFIALTYA) is a signal peptide. Positions 19–57 (RSFEDLKEEIKNEIEKEIFDDLEEESDELDNNVKKFNDA) are excised as a propeptide. Position 80 is a serine amide (Ser80).

Belongs to the arminin family. In terms of tissue distribution, expressed in entodermal epithelium along the body column.

The protein resides in the secreted. It is found in the target cell membrane. Its function is as follows. Antimicrobial peptide with a broad-spectrum antimicrobial activity. Keeps its antibacterial activity under a wide range of salt concentrations that mimic physiological conditions of human blood, which is surprising, since Hydra is an obligate freshwater animal with nearly no salt tolerance. Does not affect red blood cells. In Hydra vulgaris (Hydra), this protein is Arminin 3b.